The primary structure comprises 160 residues: Nascent polypeptide-associated complex subunit alpha (160 aa).

The NAC-A/B domain occupies Thr-10–Leu-75. The UBA domain occupies Val-120–Thr-159.

This sequence belongs to the NAC-alpha family. In terms of assembly, part of the nascent polypeptide-associated complex (NAC), consisting of nacA and nacB.

The protein localises to the cytoplasm. Its subcellular location is the nucleus. In terms of biological role, component of the nascent polypeptide-associated complex (NAC), a dynamic component of the ribosomal exit tunnel, protecting the emerging polypeptides from interaction with other cytoplasmic proteins to ensure appropriate nascent protein targeting. The NAC complex also promotes mitochondrial protein import by enhancing productive ribosome interactions with the outer mitochondrial membrane and blocks the inappropriate interaction of ribosomes translating non-secretory nascent polypeptides with translocation sites in the membrane of the endoplasmic reticulum. May also be involved in transcription regulation. This chain is Nascent polypeptide-associated complex subunit alpha (nacA), found in Dictyostelium discoideum (Social amoeba).